The following is a 128-amino-acid chain: Small ribosomal subunit protein uS9 (128 aa).

The tract at residues 106 to 128 (PRVVERKKPGRPKARKRFQFSKR) is disordered. Residues 113–128 (KPGRPKARKRFQFSKR) show a composition bias toward basic residues.

This sequence belongs to the universal ribosomal protein uS9 family.

The protein is Small ribosomal subunit protein uS9 of Porphyromonas gingivalis (strain ATCC 33277 / DSM 20709 / CIP 103683 / JCM 12257 / NCTC 11834 / 2561).